Here is a 164-residue protein sequence, read N- to C-terminus: Transcription elongation factor GreA (164 aa).

Residues 50–76 are a coiled coil; that stretch reads YHAAREEQGQQEARIRQLQELLNNAKV.

This sequence belongs to the GreA/GreB family.

Its function is as follows. Necessary for efficient RNA polymerase transcription elongation past template-encoded arresting sites. The arresting sites in DNA have the property of trapping a certain fraction of elongating RNA polymerases that pass through, resulting in locked ternary complexes. Cleavage of the nascent transcript by cleavage factors such as GreA or GreB allows the resumption of elongation from the new 3'terminus. GreA releases sequences of 2 to 3 nucleotides. This is Transcription elongation factor GreA from Mycobacteroides abscessus (strain ATCC 19977 / DSM 44196 / CCUG 20993 / CIP 104536 / JCM 13569 / NCTC 13031 / TMC 1543 / L948) (Mycobacterium abscessus).